Here is a 382-residue protein sequence, read N- to C-terminus: Mannitol-1-phosphate 5-dehydrogenase (382 aa).

3–14 (ALHFGAGNIGRG) provides a ligand contact to NAD(+).

Belongs to the mannitol dehydrogenase family.

It catalyses the reaction D-mannitol 1-phosphate + NAD(+) = beta-D-fructose 6-phosphate + NADH + H(+). The polypeptide is Mannitol-1-phosphate 5-dehydrogenase (Klebsiella pneumoniae (strain 342)).